The sequence spans 621 residues: tRNA uridine 5-carboxymethylaminomethyl modification enzyme MnmG (621 aa).

Residue 8 to 13 participates in FAD binding; sequence GAGHAG. The segment at 199-227 is disordered; that stretch reads PRIDRRSVDYSRVEEQKGDENPPPFSFST. Residues 200-218 show a composition bias toward basic and acidic residues; it reads RIDRRSVDYSRVEEQKGDE. 269-283 serves as a coordination point for NAD(+); that stretch reads GPRYCPSIEDKIFRF.

The protein belongs to the MnmG family. As to quaternary structure, homodimer. Heterotetramer of two MnmE and two MnmG subunits. FAD is required as a cofactor.

Its subcellular location is the cytoplasm. Functionally, NAD-binding protein involved in the addition of a carboxymethylaminomethyl (cmnm) group at the wobble position (U34) of certain tRNAs, forming tRNA-cmnm(5)s(2)U34. The sequence is that of tRNA uridine 5-carboxymethylaminomethyl modification enzyme MnmG from Chlorobium luteolum (strain DSM 273 / BCRC 81028 / 2530) (Pelodictyon luteolum).